The primary structure comprises 413 residues: Arginine biosynthesis bifunctional protein ArgJ, mitochondrial (413 aa).

Substrate-binding residues include Thr168, Lys194, Thr205, and Glu292. Catalysis depends on Thr205, which acts as the Nucleophile.

The protein belongs to the ArgJ family. As to quaternary structure, heterodimer of an alpha and a beta chain. The alpha and beta chains are autoproteolytically processed from a single precursor protein within the mitochondrion.

The protein resides in the mitochondrion matrix. It carries out the reaction N(2)-acetyl-L-ornithine + L-glutamate = N-acetyl-L-glutamate + L-ornithine. The enzyme catalyses L-glutamate + acetyl-CoA = N-acetyl-L-glutamate + CoA + H(+). The protein operates within amino-acid biosynthesis; L-arginine biosynthesis; L-ornithine and N-acetyl-L-glutamate from L-glutamate and N(2)-acetyl-L-ornithine (cyclic): step 1/1. Its pathway is amino-acid biosynthesis; L-arginine biosynthesis; N(2)-acetyl-L-ornithine from L-glutamate: step 1/4. Functionally, catalyzes two activities which are involved in the cyclic version of arginine biosynthesis: the synthesis of acetylglutamate from glutamate and acetyl-CoA, and of ornithine by transacetylation between acetylornithine and glutamate. The chain is Arginine biosynthesis bifunctional protein ArgJ, mitochondrial from Clavispora lusitaniae (strain ATCC 42720) (Yeast).